Consider the following 349-residue polypeptide: MSSVTQLFKNNPVNRDRIIPLDFTNTKTLPDSHVWSKPEPETTSGPIPVISLSNPEEHGLLRQACEEWGVFHITDHGVSHSLLHNVDCQMKRLFSLPMHRKILAVRSPDESTGYGVVRISMFYDKLMWSEGFSVMGSSLRRHATLLWPDDHAEFCNVMEEYQKAMDDLSHRLISMLMGSLGLTHEDLGWLVPDKTGSGTDSIQSFLQLNSYPVCPDPHLAMGLAPHTDSSLLTILYQGNIPGLEIESPQEEGSRWIGVEPIEGSLVVIMGDLSHIISNGQFRSTMHRAVVNKTHHRVSAAYFAGPPKNLQIGPLTSDKNHPPIYRRLIWEEYLAAKATHFNKALTLFRC.

Residues 201-305 (SIQSFLQLNS…RVSAAYFAGP (105 aa)) form the Fe2OG dioxygenase domain. Residues histidine 226, aspartate 228, and histidine 286 each contribute to the Fe cation site. Arginine 296 is a catalytic residue.

This sequence belongs to the iron/ascorbate-dependent oxidoreductase family. GA3OX subfamily. L-ascorbate is required as a cofactor. Requires Fe cation as cofactor. Expressed in flower clusters and siliques.

It carries out the reaction gibberellin A20 + 2-oxoglutarate + O2 = gibberellin A1 + succinate + CO2. The protein operates within plant hormone biosynthesis; gibberellin biosynthesis. Converts the inactive gibberellin (GA) precursors GA9 and GA20 in the bioactives gibberellins GA4 and GA1. Involved in the production of bioactive GA for reproductive development. In Arabidopsis thaliana (Mouse-ear cress), this protein is Gibberellin 3-beta-dioxygenase 3 (GA3OX3).